We begin with the raw amino-acid sequence, 93 residues long: Large ribosomal subunit protein bL27 (93 aa).

A disordered region spans residues 1–22 (MAHKKAGGSSRNGRDSAGRRLG).

This sequence belongs to the bacterial ribosomal protein bL27 family.

The polypeptide is Large ribosomal subunit protein bL27 (Parvibaculum lavamentivorans (strain DS-1 / DSM 13023 / NCIMB 13966)).